The following is a 545-amino-acid chain: CTP synthase (545 aa).

The amidoligase domain stretch occupies residues 1-266 (MITNYIFVTG…DQYICDKFNL (266 aa)). S14 lines the CTP pocket. S14 contributes to the UTP binding site. ATP is bound by residues 15–20 (SLGKGI) and D72. D72 and E140 together coordinate Mg(2+). CTP-binding positions include 147-149 (DIE), 187-192 (KTKPTQ), and K223. UTP contacts are provided by residues 187-192 (KTKPTQ) and K223. 239 to 241 (KDV) provides a ligand contact to ATP. One can recognise a Glutamine amidotransferase type-1 domain in the interval 291-542 (SIGMVGKYIE…VKSALAHHQD (252 aa)). Residue G352 coordinates L-glutamine. C379 serves as the catalytic Nucleophile; for glutamine hydrolysis. L-glutamine is bound by residues 380 to 383 (LGMQ), E403, and R470. Residues H515 and E517 contribute to the active site.

This sequence belongs to the CTP synthase family. In terms of assembly, homotetramer.

The catalysed reaction is UTP + L-glutamine + ATP + H2O = CTP + L-glutamate + ADP + phosphate + 2 H(+). The enzyme catalyses L-glutamine + H2O = L-glutamate + NH4(+). It catalyses the reaction UTP + NH4(+) + ATP = CTP + ADP + phosphate + 2 H(+). The protein operates within pyrimidine metabolism; CTP biosynthesis via de novo pathway; CTP from UDP: step 2/2. With respect to regulation, allosterically activated by GTP, when glutamine is the substrate; GTP has no effect on the reaction when ammonia is the substrate. The allosteric effector GTP functions by stabilizing the protein conformation that binds the tetrahedral intermediate(s) formed during glutamine hydrolysis. Inhibited by the product CTP, via allosteric rather than competitive inhibition. Functionally, catalyzes the ATP-dependent amination of UTP to CTP with either L-glutamine or ammonia as the source of nitrogen. Regulates intracellular CTP levels through interactions with the four ribonucleotide triphosphates. This Hamiltonella defensa subsp. Acyrthosiphon pisum (strain 5AT) protein is CTP synthase.